The following is a 515-amino-acid chain: Microtubule-associated protein 70-4 (515 aa).

Coiled coils occupy residues 26–106 (VVDE…ALSA) and 136–351 (LESD…NTSA). The required for targeting to microtubules stretch occupies residues 208–410 (LLEKSNRQQV…KQPGSETEAA (203 aa)). The interval 340–515 (DDMRNESSNT…VKSTKDSCEI (176 aa)) is disordered. Over residues 345–362 (ESSNTSASNKDNATSKQA) the composition is skewed to polar residues. The segment covering 364-374 (PKRSSSQPRRP) has biased composition (low complexity). Basic and acidic residues-rich tracts occupy residues 409 to 425 (AAEK…DSPR), 450 to 461 (KVADDAGKENKE), and 484 to 515 (SEHE…SCEI).

Belongs to the MAP70 family.

It localises to the cytoplasm. It is found in the cytoskeleton. In terms of biological role, plant-specific protein that interact with microtubules. The protein is Microtubule-associated protein 70-4 (MAP70.4) of Oryza sativa subsp. japonica (Rice).